The following is a 159-amino-acid chain: MAKVDVISRVTVLAEQVISSLGMELVDLEYKREGREMVLRLFVDKEGGVNLDDCASVSRELSEVLDVEDVISEHYSLEVSSPGIDRPLKKVEDFQRFKGRLVKIRTFEPLPDDAGNKRKTFLGELKGIENGVVLVALKEGQNAAIPFEKVAKANLEFEF.

This sequence belongs to the RimP family.

The protein resides in the cytoplasm. Functionally, required for maturation of 30S ribosomal subunits. This chain is Ribosome maturation factor RimP, found in Geotalea uraniireducens (strain Rf4) (Geobacter uraniireducens).